Consider the following 79-residue polypeptide: Probable Fe(2+)-trafficking protein (79 aa).

This sequence belongs to the Fe(2+)-trafficking protein family. As to quaternary structure, monomer.

Could be a mediator in iron transactions between iron acquisition and iron-requiring processes, such as synthesis and/or repair of Fe-S clusters in biosynthetic enzymes. The polypeptide is Probable Fe(2+)-trafficking protein (Blochmanniella floridana).